The following is a 207-amino-acid chain: Guanylate kinase (207 aa).

Residues 4-184 (GTLYIVSAPS…ALSDLKTIIR (181 aa)) form the Guanylate kinase-like domain. An ATP-binding site is contributed by 11–18 (APSGAGKS).

Belongs to the guanylate kinase family.

The protein localises to the cytoplasm. It catalyses the reaction GMP + ATP = GDP + ADP. In terms of biological role, essential for recycling GMP and indirectly, cGMP. This Yersinia pestis bv. Antiqua (strain Antiqua) protein is Guanylate kinase.